We begin with the raw amino-acid sequence, 408 residues long: Aspartate aminotransferase, cytoplasmic (408 aa).

L-aspartate is bound by residues glycine 36, tryptophan 133, and asparagine 187. Lysine 251 is modified (N6-(pyridoxal phosphate)lysine). Residue arginine 379 coordinates L-aspartate.

It belongs to the class-I pyridoxal-phosphate-dependent aminotransferase family. As to quaternary structure, homodimer. Pyridoxal 5'-phosphate is required as a cofactor. Expressed in all somatic tissues including the nervous system.

Its subcellular location is the cytoplasm. The catalysed reaction is L-aspartate + 2-oxoglutarate = oxaloacetate + L-glutamate. Its function is as follows. Biosynthesis of L-glutamate from L-aspartate. Important regulator of levels of glutamate, the major excitatory neurotransmitter of the central nervous system. This is Aspartate aminotransferase, cytoplasmic from Caenorhabditis elegans.